We begin with the raw amino-acid sequence, 325 residues long: Peroxidase 68 (325 aa).

An N-terminal signal peptide occupies residues 1–28; sequence MECYEQSRQRAAFVVLLFIVMLGSQAQA. Glutamine 29 carries the post-translational modification Pyrrolidone carboxylic acid. Cystine bridges form between cysteine 39–cysteine 119, cysteine 72–cysteine 77, cysteine 125–cysteine 321, and cysteine 205–cysteine 230. Histidine 70 serves as the catalytic Proton acceptor. Residues aspartate 71, valine 74, glycine 76, aspartate 78, and serine 80 each contribute to the Ca(2+) site. A glycan (N-linked (GlcNAc...) asparagine) is linked at asparagine 99. Proline 168 lines the substrate pocket. Histidine 198 is a heme b binding site. Threonine 199 provides a ligand contact to Ca(2+). N-linked (GlcNAc...) asparagine glycosylation is present at asparagine 214. 3 residues coordinate Ca(2+): aspartate 245, threonine 248, and aspartate 253.

The protein belongs to the peroxidase family. Classical plant (class III) peroxidase subfamily. Heme b is required as a cofactor. The cofactor is Ca(2+).

It localises to the secreted. It catalyses the reaction 2 a phenolic donor + H2O2 = 2 a phenolic radical donor + 2 H2O. Functionally, removal of H(2)O(2), oxidation of toxic reductants, biosynthesis and degradation of lignin, suberization, auxin catabolism, response to environmental stresses such as wounding, pathogen attack and oxidative stress. These functions might be dependent on each isozyme/isoform in each plant tissue. This is Peroxidase 68 (PER68) from Arabidopsis thaliana (Mouse-ear cress).